A 508-amino-acid chain; its full sequence is Tryptamine 4-monooxygenase (508 aa).

Residues 1–19 (MIAVLFSFVIAGCIYYIVS) form the signal peptide. Heme is bound at residue C439.

This sequence belongs to the cytochrome P450 family. Requires heme as cofactor.

The catalysed reaction is tryptamine + AH2 + O2 = 4-hydroxytryptamine + A + H2O. Its pathway is secondary metabolite biosynthesis. In terms of biological role, cytochrome P450 monooxygenase; part of the gene cluster that mediates the biosynthesis of psilocybin, a psychotropic tryptamine-derived natural product. The first step in the pathway is the decarboxylation of L-tryptophan to tryptamine by the decarboxylase psiD. 4-hydroxy-L-tryptophan is accepted as substrate by psiD as well. The cytochrome P450 monooxygenase psiH then converts tryptamine to 4-hydroxytryptamine. The kinase psiK catalyzes the 4-O-phosphorylation step by converting 4-hydroxytryptamine into norbaeocystin. The methyltransferase psiM then catalyzes iterative methyl transfer to the amino group of norbaeocystin to yield psilocybin via a monomethylated intermediate, baeocystin. The protein is Tryptamine 4-monooxygenase of Psilocybe cubensis (Psychedelic mushroom).